Consider the following 254-residue polypeptide: 3-deoxy-manno-octulosonate cytidylyltransferase (254 aa).

The protein belongs to the KdsB family.

It is found in the cytoplasm. It catalyses the reaction 3-deoxy-alpha-D-manno-oct-2-ulosonate + CTP = CMP-3-deoxy-beta-D-manno-octulosonate + diphosphate. It functions in the pathway nucleotide-sugar biosynthesis; CMP-3-deoxy-D-manno-octulosonate biosynthesis; CMP-3-deoxy-D-manno-octulosonate from 3-deoxy-D-manno-octulosonate and CTP: step 1/1. It participates in bacterial outer membrane biogenesis; lipopolysaccharide biosynthesis. Its function is as follows. Activates KDO (a required 8-carbon sugar) for incorporation into bacterial lipopolysaccharide in Gram-negative bacteria. This Bordetella bronchiseptica (strain ATCC BAA-588 / NCTC 13252 / RB50) (Alcaligenes bronchisepticus) protein is 3-deoxy-manno-octulosonate cytidylyltransferase.